A 497-amino-acid polypeptide reads, in one-letter code: 3-octaprenyl-4-hydroxybenzoate carboxy-lyase (497 aa).

Position 172 (asparagine 172) interacts with Mn(2+). Prenylated FMN is bound by residues 175-177 (IYR), 189-191 (RWL), and 194-195 (RG). Residue glutamate 238 coordinates Mn(2+). The Proton donor role is filled by aspartate 287.

The protein belongs to the UbiD family. Homohexamer. Prenylated FMN serves as cofactor. The cofactor is Mn(2+).

The protein resides in the cell membrane. The enzyme catalyses a 4-hydroxy-3-(all-trans-polyprenyl)benzoate + H(+) = a 2-(all-trans-polyprenyl)phenol + CO2. It participates in cofactor biosynthesis; ubiquinone biosynthesis. Its function is as follows. Catalyzes the decarboxylation of 3-octaprenyl-4-hydroxy benzoate to 2-octaprenylphenol, an intermediate step in ubiquinone biosynthesis. This Enterobacter sp. (strain 638) protein is 3-octaprenyl-4-hydroxybenzoate carboxy-lyase.